The primary structure comprises 424 residues: Protein-glutamate methylesterase/protein-glutamine glutaminase (424 aa).

The Response regulatory domain maps to 6-123 (RVLVVDDSAF…SLDDFTRQLT (118 aa)). Asp-57 is subject to 4-aspartylphosphate. The disordered stretch occupies residues 177–210 (SRLSPGRSPGGKEGVAGAVSAGSTRGEAIRPGKG). The CheB-type methylesterase domain occupies 229–423 (RRPGIEVVAI…PAIVALVTGA (195 aa)). Residues Ser-241, His-268, and Asp-365 contribute to the active site.

This sequence belongs to the CheB family. Post-translationally, phosphorylated by CheA. Phosphorylation of the N-terminal regulatory domain activates the methylesterase activity.

It localises to the cytoplasm. The catalysed reaction is [protein]-L-glutamate 5-O-methyl ester + H2O = L-glutamyl-[protein] + methanol + H(+). The enzyme catalyses L-glutaminyl-[protein] + H2O = L-glutamyl-[protein] + NH4(+). Its function is as follows. Involved in chemotaxis. Part of a chemotaxis signal transduction system that modulates chemotaxis in response to various stimuli. Catalyzes the demethylation of specific methylglutamate residues introduced into the chemoreceptors (methyl-accepting chemotaxis proteins or MCP) by CheR. Also mediates the irreversible deamidation of specific glutamine residues to glutamic acid. The polypeptide is Protein-glutamate methylesterase/protein-glutamine glutaminase (Moorella thermoacetica (strain ATCC 39073 / JCM 9320)).